Consider the following 485-residue polypeptide: Glutamyl-tRNA(Gln) amidotransferase subunit A (485 aa).

Residues Lys79 and Ser154 each act as charge relay system in the active site. Ser178 (acyl-ester intermediate) is an active-site residue.

The protein belongs to the amidase family. GatA subfamily. In terms of assembly, heterotrimer of A, B and C subunits.

The catalysed reaction is L-glutamyl-tRNA(Gln) + L-glutamine + ATP + H2O = L-glutaminyl-tRNA(Gln) + L-glutamate + ADP + phosphate + H(+). In terms of biological role, allows the formation of correctly charged Gln-tRNA(Gln) through the transamidation of misacylated Glu-tRNA(Gln) in organisms which lack glutaminyl-tRNA synthetase. The reaction takes place in the presence of glutamine and ATP through an activated gamma-phospho-Glu-tRNA(Gln). This chain is Glutamyl-tRNA(Gln) amidotransferase subunit A, found in Sulfurihydrogenibium sp. (strain YO3AOP1).